Here is a 233-residue protein sequence, read N- to C-terminus: N-(5'-phosphoribosyl)anthranilate isomerase (233 aa).

The protein belongs to the TrpF family.

The enzyme catalyses N-(5-phospho-beta-D-ribosyl)anthranilate = 1-(2-carboxyphenylamino)-1-deoxy-D-ribulose 5-phosphate. It participates in amino-acid biosynthesis; L-tryptophan biosynthesis; L-tryptophan from chorismate: step 3/5. The polypeptide is N-(5'-phosphoribosyl)anthranilate isomerase (Ralstonia pickettii (strain 12J)).